The primary structure comprises 495 residues: Lysine--tRNA ligase (495 aa).

Mg(2+) is bound by residues glutamate 406 and glutamate 413.

The protein belongs to the class-II aminoacyl-tRNA synthetase family. As to quaternary structure, homodimer. Mg(2+) is required as a cofactor.

The protein localises to the cytoplasm. It catalyses the reaction tRNA(Lys) + L-lysine + ATP = L-lysyl-tRNA(Lys) + AMP + diphosphate. The protein is Lysine--tRNA ligase of Staphylococcus saprophyticus subsp. saprophyticus (strain ATCC 15305 / DSM 20229 / NCIMB 8711 / NCTC 7292 / S-41).